A 126-amino-acid chain; its full sequence is Adenosine 5'-monophosphoramidase HINT1 (126 aa).

At Ala2 the chain carries N-acetylalanine. Residues 18-126 form the HIT domain; it reads IFGKIIRKEI…GGRQMNWPPG (109 aa). N6-acetyllysine occurs at positions 21 and 30. 43-44 lines the AMP pocket; sequence DI. Phosphoserine is present on residues Ser45 and Ser72. AMP contacts are provided by residues Asn99, 105-107, and 112-114; these read GQS and HLH. The short motif at 110-114 is the Histidine triad motif element; it reads HVHLH. The active-site Tele-AMP-histidine intermediate is His112.

Belongs to the HINT family. In terms of assembly, homodimer. Interacts with CDK7. Interacts with RUVBL1 and RUVBL2 and is associated with the LEF1/TCF1-CTNNB1 complex and with a KAT5 histone acetyltransferase complex. Identified in a complex with MITF and CTNNB1. Interacts with CDC34 and RBX1, and is part of a SCF (SKP2-CUL1-F-box protein) E3 ubiquitin-protein ligase complex. Interacts with SUMO1, SUMO2 and RGS17. Interacts with the Ten-1 ICD form of TENM1. Interacts with CALM1; interaction increases in the presence of calcium ions. As to expression, widely expressed.

The protein resides in the cytoplasm. It is found in the nucleus. It carries out the reaction adenosine 5'-phosphoramidate + H2O = AMP + NH4(+). Exhibits adenosine 5'-monophosphoramidase activity, hydrolyzing purine nucleotide phosphoramidates with a single phosphate group such as adenosine 5'monophosphoramidate (AMP-NH2) to yield AMP and NH2. Hydrolyzes adenosine 5'monophosphomorpholidate (AMP-morpholidate) and guanosine 5'monophosphomorpholidate (GMP-morpholidate). Hydrolyzes lysyl-AMP (AMP-N-epsilon-(N-alpha-acetyl lysine methyl ester)) generated by lysine tRNA ligase, as well as Met-AMP, His-AMP and Asp-AMP, lysyl-GMP (GMP-N-epsilon-(N-alpha-acetyl lysine methyl ester)) and AMP-N-alanine methyl ester. Can also convert adenosine 5'-O-phosphorothioate and guanosine 5'-O-phosphorothioate to the corresponding nucleoside 5'-O-phosphates with concomitant release of hydrogen sulfide. In addition, functions as a scaffolding protein that modulates transcriptional activation by the LEF1/TCF1-CTNNB1 complex and by the complex formed with MITF and CTNNB1. Modulates p53/TP53 levels and p53/TP53-mediated apoptosis. Modulates proteasomal degradation of target proteins by the SCF (SKP2-CUL1-F-box protein) E3 ubiquitin-protein ligase complex. Also exhibits SUMO-specific isopeptidase activity, deconjugating SUMO1 from RANGAP1 and RGS17. The sequence is that of Adenosine 5'-monophosphoramidase HINT1 (HINT1) from Bos taurus (Bovine).